Consider the following 500-residue polypeptide: NAD(P)H-quinone oxidoreductase chain 4, chloroplastic (500 aa).

14 helical membrane passes run 4-24 (FPWL…MLFL), 35-55 (YTIC…CYNF), 87-107 (IGTI…AFPV), 113-130 (FFHF…GSFS), 134-154 (LLLF…LLSM), 167-187 (FILY…GISL), 211-231 (ILFY…IPLH), 242-262 (HYST…YGLV), 272-292 (AHSM…IYAA), 305-325 (IAYS…SITD), 330-350 (GAIL…FLAG), 386-406 (LALP…GIIT), 416-436 (IFII…LLSM), and 462-482 (LFLS…PDFV).

The protein belongs to the complex I subunit 4 family.

The protein localises to the plastid. It is found in the chloroplast thylakoid membrane. It catalyses the reaction a plastoquinone + NADH + (n+1) H(+)(in) = a plastoquinol + NAD(+) + n H(+)(out). It carries out the reaction a plastoquinone + NADPH + (n+1) H(+)(in) = a plastoquinol + NADP(+) + n H(+)(out). This is NAD(P)H-quinone oxidoreductase chain 4, chloroplastic (ndhD) from Arabidopsis thaliana (Mouse-ear cress).